The following is a 331-amino-acid chain: Probable allantoicase (331 aa).

It belongs to the allantoicase family.

It catalyses the reaction allantoate + H2O = (S)-ureidoglycolate + urea. The protein operates within nitrogen metabolism; (S)-allantoin degradation; (S)-ureidoglycolate from allantoate (aminidohydrolase route): step 1/1. This Pseudomonas fluorescens (strain Pf0-1) protein is Probable allantoicase.